Reading from the N-terminus, the 338-residue chain is mRNA decay activator protein ZFP36L1 (338 aa).

Positions 1-111 (MTTTLVSATI…QKQPGSGQVN (111 aa)) are necessary and sufficient for the association with mRNA decay enzymes and mRNA decay activation. Phosphoserine; by MAPKAPK2 is present on Ser-54. The residue at position 90 (Ser-90) is a Phosphoserine; by PKB/AKT1. Phosphoserine; by PKB/AKT1 and MAPKAPK2 is present on Ser-92. Residues 93–113 (EGGERLLPTQKQPGSGQVNSS) form a disordered region. Residues 101–113 (TQKQPGSGQVNSS) are compositionally biased toward polar residues. 2 consecutive C3H1-type zinc fingers follow at residues 114 to 142 (RYKTELCRPFEENGACKYGDKCQFAHGIH) and 152 to 180 (KYKTELCRTFHTIGFCPYGPRCHFIHNAE). Positions 185 to 338 (LAGGRDLSAD…IFSRLSISDD (154 aa)) are necessary for mRNA decay activation. The residue at position 203 (Ser-203) is a Phosphoserine; by PKB/AKT1 and MAPKAPK2. Positions 273-338 (SPTTFLFRPM…IFSRLSISDD (66 aa)) are disordered. A compositionally biased stretch (low complexity) spans 305–318 (YLSSSSSSHSGSDS). At Ser-318 the chain carries Phosphoserine. Ser-334 bears the Phosphoserine; by RPS6KA1 mark.

In terms of assembly, associates with the cytoplasmic CCR4-NOT deadenylase and RNA exosome complexes to trigger ARE-containing mRNA deadenylation and decay processes. Interacts with CNOT1. Interacts (via N-terminus) with CNOT6. Interacts with CNOT7; this interaction is inhibited in response to phorbol 12-myristate 13-acetate (PMA) treatment in a p38 MAPK-dependent manner. Interacts with DCP1A. Interacts (via N-terminus) with DCP2. Interacts (via N-terminus) with EXOSC2. Interacts with XRN1. Interacts (via phosphorylated form) with YWHAB; this interaction occurs in a protein kinase AKT1-dependent manner. Interacts (via phosphorylated form) with YWHAZ; this interaction occurs in a p38 MAPK- and AKT-signaling pathways. Post-translationally, phosphorylated. Phosphorylated by RPS6KA1 at Ser-334 upon phorbol 12-myristate 13-acetate (PMA) treatment; this phosphorylation results in dissociation of the CCR4-NOT deadenylase complex and induces p38 MAPK-mediated stabilization of the low-density lipoprotein receptor LDLR mRNA. Phosphorylated by protein kinase AKT1 at Ser-92 and Ser-203 in response to insulin; these phosphorylations stabilize ZFP36L1, increase the association with 14-3-3 proteins and mediate ARE-containing mRNA stabilization. AKT1-mediated phosphorylation at Ser-92 does not impair ARE-containing RNA-binding. Phosphorylated at Ser-54, Ser-92 and Ser-203 by MAPKAPK2; these phosphorylations increase the association with 14-3-3 proteins and mediate ARE-containing mRNA stabilization in a protein kinase AKT1-independent manner. MAPKAPK2-mediated phosphorylations at Ser-54, Ser-92 and Ser-203 do not impair ARE-containing RNA-binding. Phosphorylations increase the association with 14-3-3 proteins and mediate ARE-containing mRNA stabilization during early adipogenesis in a p38 MAPK- and AKT-dependent manner. Phosphorylated by protein kinase AKT1 at Ser-92. In terms of processing, ubiquitinated. Ubiquitination leads to proteasomal degradation, a process inhibited by phosphorylations at Ser-90, Ser-92 and Ser-203.

The protein resides in the nucleus. Its subcellular location is the cytoplasm. The protein localises to the cytoplasmic granule. It is found in the P-body. Zinc-finger RNA-binding protein that destabilizes several cytoplasmic AU-rich element (ARE)-containing mRNA transcripts by promoting their poly(A) tail removal or deadenylation, and hence provide a mechanism for attenuating protein synthesis. Acts as a 3'-untranslated region (UTR) ARE mRNA-binding adapter protein to communicate signaling events to the mRNA decay machinery. Functions by recruiting the CCR4-NOT deadenylase complex and components of the cytoplasmic RNA decay machinery to the bound ARE-containing mRNAs, and hence promotes ARE-mediated mRNA deadenylation and decay processes. Also induces the degradation of ARE-containing mRNAs even in absence of poly(A) tail. Binds to 3'-UTR ARE of numerous mRNAs. Positively regulates early adipogenesis by promoting ARE-mediated mRNA decay of immediate early genes (IEGs). Promotes ARE-mediated mRNA decay of mineralocorticoid receptor NR3C2 mRNA in response to hypertonic stress. Negatively regulates hematopoietic/erythroid cell differentiation by promoting ARE-mediated mRNA decay of the transcription factor STAT5B mRNA. Positively regulates monocyte/macrophage cell differentiation by promoting ARE-mediated mRNA decay of the cyclin-dependent kinase CDK6 mRNA. Promotes degradation of ARE-containing pluripotency-associated mRNAs in embryonic stem cells (ESCs), such as NANOG, through a fibroblast growth factor (FGF)-induced MAPK-dependent signaling pathway, and hence attenuates ESC self-renewal and positively regulates mesendoderm differentiation. May play a role in mediating pro-apoptotic effects in malignant B-cells by promoting ARE-mediated mRNA decay of BCL2 mRNA. In association with ZFP36L2 maintains quiescence on developing B lymphocytes by promoting ARE-mediated decay of several mRNAs encoding cell cycle regulators that help B cells progress through the cell cycle, and hence ensuring accurate variable-diversity-joining (VDJ) recombination and functional immune cell formation. Together with ZFP36L2 is also necessary for thymocyte development and prevention of T-cell acute lymphoblastic leukemia (T-ALL) transformation by promoting ARE-mediated mRNA decay of the oncogenic transcription factor NOTCH1 mRNA. Participates in the delivery of target ARE-mRNAs to processing bodies (PBs). In addition to its cytosolic mRNA-decay function, plays a role in the regulation of nuclear mRNA 3'-end processing; modulates mRNA 3'-end maturation efficiency of the DLL4 mRNA through binding with an ARE embedded in a weak noncanonical polyadenylation (poly(A)) signal in endothelial cells. Also involved in the regulation of stress granule (SG) and P-body (PB) formation and fusion. Plays a role in vasculogenesis and endocardial development. Plays a role in the regulation of keratinocyte proliferation, differentiation and apoptosis. Plays a role in myoblast cell differentiation. The chain is mRNA decay activator protein ZFP36L1 from Rattus norvegicus (Rat).